The primary structure comprises 179 residues: B-cell acute lymphoblastic leukemia-expressed protein (179 aa).

Disordered regions lie at residues 1–20 and 65–86; these read MMKD…TDLQ and RDTP…RGKA. The segment covering 10-20 has biased composition (polar residues); that stretch reads SWASEESTDLQ.

The chain is B-cell acute lymphoblastic leukemia-expressed protein (BLACE) from Homo sapiens (Human).